An 87-amino-acid chain; its full sequence is Large ribosomal subunit protein eL33 (87 aa).

The protein belongs to the eukaryotic ribosomal protein eL33 family.

The polypeptide is Large ribosomal subunit protein eL33 (Pyrococcus horikoshii (strain ATCC 700860 / DSM 12428 / JCM 9974 / NBRC 100139 / OT-3)).